The sequence spans 214 residues: MVGWLKGLIVYKLQRGNRSQITLNCNGVGYEVQITQREWLTLENDQTIQLWIHQSISADNWQFFGFKSTQERDIFRELISVNGVGPQAGMALMQECKSQELVEAISNGDLRRLCKAQGIGKRTAERLAVELRASIAAFAGMDPAPSLAEGVSSEQMPESGADVEATLSMLGYDDLEVRRAIRAIAEGSDGPPPPGDDQDAWLRGCLQWLSRDSA.

The tract at residues 1-67 is domain I; sequence MVGWLKGLIV…ADNWQFFGFK (67 aa). Residues 68–146 are domain II; it reads STQERDIFRE…AFAGMDPAPS (79 aa). Residues 147–154 are flexible linker; the sequence is LAEGVSSE. Residues 155-214 are domain III; that stretch reads QMPESGADVEATLSMLGYDDLEVRRAIRAIAEGSDGPPPPGDDQDAWLRGCLQWLSRDSA.

It belongs to the RuvA family. As to quaternary structure, homotetramer. Forms an RuvA(8)-RuvB(12)-Holliday junction (HJ) complex. HJ DNA is sandwiched between 2 RuvA tetramers; dsDNA enters through RuvA and exits via RuvB. An RuvB hexamer assembles on each DNA strand where it exits the tetramer. Each RuvB hexamer is contacted by two RuvA subunits (via domain III) on 2 adjacent RuvB subunits; this complex drives branch migration. In the full resolvosome a probable DNA-RuvA(4)-RuvB(12)-RuvC(2) complex forms which resolves the HJ.

It localises to the cytoplasm. Functionally, the RuvA-RuvB-RuvC complex processes Holliday junction (HJ) DNA during genetic recombination and DNA repair, while the RuvA-RuvB complex plays an important role in the rescue of blocked DNA replication forks via replication fork reversal (RFR). RuvA specifically binds to HJ cruciform DNA, conferring on it an open structure. The RuvB hexamer acts as an ATP-dependent pump, pulling dsDNA into and through the RuvAB complex. HJ branch migration allows RuvC to scan DNA until it finds its consensus sequence, where it cleaves and resolves the cruciform DNA. This Synechococcus sp. (strain CC9605) protein is Holliday junction branch migration complex subunit RuvA.